Here is a 473-residue protein sequence, read N- to C-terminus: H(+)/Cl(-) exchange transporter ClcA (473 aa).

Topologically, residues 1 to 32 (MKTDTSTFLAQQIVRLRRRDQIRRLMQRDKTP) are cytoplasmic. Residues 33–69 (LAILFMAAVVGTLTGLVGVAFEKAVSWVQNMRIGALV) traverse the membrane as a helical segment. The Periplasmic segment spans residues 70–76 (QVADHAF). A helical transmembrane segment spans residues 77 to 100 (LLWPLAFILSALLAMVGYFLVRKF). The short motif at 106–110 (GSGIP) is the Selectivity filter part_1 element. Residue serine 107 coordinates chloride. The helical intramembrane region spans 109-116 (IPEIEGAL). Over 117 to 123 (EELRPVR) the chain is Cytoplasmic. Transmembrane regions (helical) follow at residues 124 to 141 (WWRV…TLGA) and 148 to 166 (EGPT…LDVF). Residues 146–150 (GREGP) carry the Selectivity filter part_2 motif. At 167-176 (RMRSAEARHT) the chain is on the cytoplasmic side. 2 consecutive intramembrane regions (helical) follow at residues 177-189 (LLAT…LSAA) and 193-201 (PLAGILFII). At 202–214 (EEMRPQFRYNLIS) the chain is on the cytoplasmic side. Residues 215–232 (IKAVFTGVIMSSIVFRIF) traverse the membrane as a helical segment. At 233-252 (NGEAPIIEVGKLSDAPVNTL) the chain is on the periplasmic side. Residues 253 to 281 (WLYLILGIIFGCVGPVFNSLVLRTQDMFQ) form a helical membrane-spanning segment. The Cytoplasmic segment spans residues 282–287 (RFHGGE). A helical transmembrane segment spans residues 288–309 (IKKWVLMGGAIGGLCGILGLIE). The Periplasmic segment spans residues 310-329 (PEAAGGGFNLIPIAAAGNFS). 2 helical membrane-spanning segments follow: residues 330–349 (VGLL…LCFS) and 355–376 (GIFA…MAAA). The short motif at 355-359 (GIFAP) is the Selectivity filter part_3 element. The chloride site is built by isoleucine 356 and phenylalanine 357. Over 377–386 (VLFPQYHLEA) the chain is Periplasmic. The segment at residues 387 to 401 (GTFAIAGMGALMAAS) is an intramembrane region (helical). Residues 402–404 (VRA) constitute an intramembrane region (note=Loop between two helices). Positions 405-416 (PLTGIVLVLEMT) form an intramembrane region, helical. Residues 417-421 (DNYQL) constitute an intramembrane region (note=Loop between two helices). A helical membrane pass occupies residues 422–438 (ILPMIITCLGATLLAQF). Topologically, residues 439–473 (LGGKPLYSTILARTLAKQDAEQAAKNQNASAGENT) are cytoplasmic. Residue tyrosine 445 coordinates chloride.

The protein belongs to the chloride channel (TC 2.A.49) family. ClcA subfamily. As to quaternary structure, homodimer.

Its subcellular location is the cell inner membrane. It carries out the reaction 2 chloride(in) + H(+)(out) = 2 chloride(out) + H(+)(in). Functionally, proton-coupled chloride transporter. Functions as antiport system and exchanges two chloride ions for 1 proton. Probably acts as an electrical shunt for an outwardly-directed proton pump that is linked to amino acid decarboxylation, as part of the extreme acid resistance (XAR) response. This chain is H(+)/Cl(-) exchange transporter ClcA, found in Salmonella choleraesuis (strain SC-B67).